Consider the following 395-residue polypeptide: Probable nitrate/nitrite transporter NarK2 (395 aa).

Helical transmembrane passes span 8-28 (LVLA…IGPL), 45-65 (LLVA…GPLT), 72-92 (AMLI…GVAA), 98-118 (ALLV…AVGI), 131-151 (GFST…AFFT), 157-177 (WFGL…TAVV), 205-225 (LPVT…FVAF), 244-266 (AGAR…GWLS), 274-294 (VVLA…LQPP), 301-321 (ATFI…FAWV), 333-353 (VTGI…LVMG), and 365-385 (VGLL…ALHA).

Belongs to the major facilitator superfamily. Nitrate/nitrite porter (TC 2.A.1.8) family.

The protein resides in the cell membrane. Involved in excretion of nitrite produced by the dissimilatory reduction of nitrate. This chain is Probable nitrate/nitrite transporter NarK2 (narK2), found in Mycobacterium tuberculosis (strain CDC 1551 / Oshkosh).